We begin with the raw amino-acid sequence, 285 residues long: OPEP-3 protein (285 aa).

The protein is OPEP-3 protein (OPEP-3) of Orgyia pseudotsugata multicapsid polyhedrosis virus (OpMNPV).